Reading from the N-terminus, the 642-residue chain is G protein-coupled receptor kinase 1 (642 aa).

The segment at 1-202 (MEIENIVANT…LEKRPVDKHT (202 aa)) is N-terminal. One can recognise an RGS domain in the interval 52 to 188 (YAFVVEKQPI…AESMYFHRFL (137 aa)). The Protein kinase domain maps to 203–470 (FRLYRVLGKG…AEEIRAHPFF (268 aa)). Residues 209 to 217 (LGKGGFGEV) and Lys-232 contribute to the ATP site. Catalysis depends on Asp-328, which acts as the Proton acceptor. The AGC-kinase C-terminal domain occupies 480-545 (EPVPWKKMEA…GCVSIPWQSE (66 aa)). Residues 612–642 (VEQQQPPKTSTQTPAVRSSRAASASGRTLVI) are disordered. Residues 614-636 (QQQPPKTSTQTPAVRSSRAASAS) show a composition bias toward low complexity.

This sequence belongs to the protein kinase superfamily. AGC Ser/Thr protein kinase family. GPRK subfamily.

The catalysed reaction is [G-protein-coupled receptor] + ATP = [G-protein-coupled receptor]-phosphate + ADP + H(+). In terms of biological role, specifically phosphorylates the activated forms of G protein-coupled receptors. In Caenorhabditis elegans, this protein is G protein-coupled receptor kinase 1 (grk-1).